The sequence spans 101 residues: Small ribosomal subunit protein uS14 (101 aa).

This sequence belongs to the universal ribosomal protein uS14 family. In terms of assembly, part of the 30S ribosomal subunit. Contacts proteins S3 and S10.

Binds 16S rRNA, required for the assembly of 30S particles and may also be responsible for determining the conformation of the 16S rRNA at the A site. The sequence is that of Small ribosomal subunit protein uS14 from Xylella fastidiosa (strain 9a5c).